The sequence spans 81 residues: Putative truncated GMC-type inactive oxidoreductase R833 (81 aa).

This sequence belongs to the GMC oxidoreductase family.

The sequence is that of Putative truncated GMC-type inactive oxidoreductase R833 from Acanthamoeba polyphaga mimivirus (APMV).